A 431-amino-acid polypeptide reads, in one-letter code: Glucose-1-phosphate adenylyltransferase (431 aa).

Position 39 (K39) interacts with beta-D-fructose 1,6-bisphosphate. AMP-binding residues include R40, H46, and R52. Alpha-D-glucose 1-phosphate is bound at residue Y114. AMP is bound at residue R130. Alpha-D-glucose 1-phosphate contacts are provided by residues G179, 194 to 195 (EK), and S212. Residues E370 and R386 each coordinate AMP. Residues 419 to 423 (REMLR) and 429 to 431 (QER) each bind beta-D-fructose 1,6-bisphosphate.

Belongs to the bacterial/plant glucose-1-phosphate adenylyltransferase family. As to quaternary structure, homotetramer.

The enzyme catalyses alpha-D-glucose 1-phosphate + ATP + H(+) = ADP-alpha-D-glucose + diphosphate. Its pathway is glycan biosynthesis; glycogen biosynthesis. Allosterically activated by fructose-1,6-bisphosphate (F16BP) and inhibited by AMP. In terms of biological role, involved in the biosynthesis of ADP-glucose, a building block required for the elongation reactions to produce glycogen. Catalyzes the reaction between ATP and alpha-D-glucose 1-phosphate (G1P) to produce pyrophosphate and ADP-Glc. This Shigella dysenteriae serotype 1 (strain Sd197) protein is Glucose-1-phosphate adenylyltransferase.